A 117-amino-acid chain; its full sequence is Non-specific lipid-transfer protein (117 aa).

The N-terminal stretch at 1-26 (MACSAMTKLALVVALCMVVSVPIAQA) is a signal peptide. 4 disulfides stabilise this stretch: cysteine 29–cysteine 76, cysteine 39–cysteine 53, cysteine 54–cysteine 99, and cysteine 74–cysteine 113.

Belongs to the plant LTP family.

Its function is as follows. Plant non-specific lipid-transfer proteins transfer phospholipids as well as galactolipids across membranes. May play a role in wax or cutin deposition in the cell walls of expanding epidermal cells and certain secretory tissues. This chain is Non-specific lipid-transfer protein, found in Prunus avium (Cherry).